A 259-amino-acid chain; its full sequence is Glucosamine-6-phosphate deaminase (259 aa).

Asp66 (proton acceptor; for enolization step) is an active-site residue. The For ring-opening step role is filled by Asp135. The active-site Proton acceptor; for ring-opening step is the His137. The For ring-opening step role is filled by Glu142.

This sequence belongs to the glucosamine/galactosamine-6-phosphate isomerase family. NagB subfamily.

The enzyme catalyses alpha-D-glucosamine 6-phosphate + H2O = beta-D-fructose 6-phosphate + NH4(+). The protein operates within amino-sugar metabolism; N-acetylneuraminate degradation; D-fructose 6-phosphate from N-acetylneuraminate: step 5/5. In terms of biological role, catalyzes the reversible isomerization-deamination of glucosamine 6-phosphate (GlcN6P) to form fructose 6-phosphate (Fru6P) and ammonium ion. This chain is Glucosamine-6-phosphate deaminase, found in Rhodococcus jostii (strain RHA1).